Reading from the N-terminus, the 20-residue chain is Punein (20 aa).

The Barwin domain maps to 1 to 20; sequence YHYYNPEENHFCATWDASKP.

Post-translationally, the N-terminus is blocked.

In Punica granatum (Pomegranate), this protein is Punein.